The following is a 1687-amino-acid chain: Vitellogenin-2 (1687 aa).

A signal peptide spans 1–15; the sequence is MRVLVLALTVALVAG. Residues 24 to 663 form the Vitellogenin domain; that stretch reads FAPGKTYEYK…DAATVLPKNI (640 aa). 6 N-linked (GlcNAc...) asparagine glycosylation sites follow: Asn-941, Asn-945, Asn-954, Asn-1004, Asn-1019, and Asn-1083. The disordered stretch occupies residues 1081–1174; the sequence is LKNSTKASSS…SSSSSKTKWQ (94 aa). The segment covering 1088–1127 has biased composition (low complexity); the sequence is SSSSSGSSRSSRSRSSSSSSSSSSSSSSRSSSSSSRSSSS. Residue Asn-1142 is glycosylated (N-linked (GlcNAc...) asparagine). The segment covering 1148–1169 has biased composition (low complexity); the sequence is SSSSSSSSSSSSSSSSSSSSSS. Residues Asn-1179, Asn-1257, Asn-1292, Asn-1342, Asn-1361, Asn-1366, and Asn-1390 are each glycosylated (N-linked (GlcNAc...) asparagine). The VWFD domain maps to 1417–1593; it reads AECTVVEDTV…SWVLPAKSCR (177 aa). Intrachain disulfides connect Cys-1419/Cys-1556 and Cys-1442/Cys-1592. Residues Asn-1577 and Asn-1655 are each glycosylated (N-linked (GlcNAc...) asparagine).

Phosvitin, an egg yolk storage protein, is one of the most highly phosphorylated (10%) proteins in nature. As to expression, produced by the liver, secreted into the blood and then sequestered by receptor mediated endocytosis into growing oocytes, where it is generally cleaved, giving rise to the respective yolk components lipovitellins and phosvitin.

Precursor of the egg-yolk proteins that are sources of nutrients during early development of oviparous organisms. This is Vitellogenin-2 from Fundulus heteroclitus (Killifish).